We begin with the raw amino-acid sequence, 167 residues long: Gametocyte-specific factor 1 homolog (167 aa).

2 consecutive CHHC U11-48K-type zinc fingers follow at residues 1–28 (MVYCPYNKEHKMLRKKLQQHILKCRVIY) and 34–61 (LMVCPFNSSHLIPEPQFFQHTQSCEDRN). Cysteine 4, histidine 10, histidine 20, cysteine 24, cysteine 37, histidine 43, histidine 53, and cysteine 57 together coordinate Zn(2+). Over residues 128 to 161 (EKRRHFGEDYEEEKKPRKAKARADLRPTPYEHRR) the composition is skewed to basic and acidic residues. The tract at residues 128–167 (EKRRHFGEDYEEEKKPRKAKARADLRPTPYEHRRPYSRRQ) is disordered.

The protein belongs to the UPF0224 (FAM112) family. In terms of assembly, interacts with piwi.

It localises to the nucleus. Its function is as follows. Acts via the piwi-interacting RNA (piRNA) pathway which mediates the repression of transposable elements during meiosis by forming complexes composed of piRNAs and piwi proteins and governs the methylation and subsequent repression of transposons. Required for repression of transposons and neighboring genes in ovarian somatic and germline cells. In Drosophila melanogaster (Fruit fly), this protein is Gametocyte-specific factor 1 homolog.